The chain runs to 1124 residues: PAN2-PAN3 deadenylation complex catalytic subunit PAN2 (1124 aa).

WD repeat units lie at residues 19–58 (IDNS…IPMP), 118–157 (PGFN…TTSF), 158–195 (NHTG…TVKS), and 309–348 (SSNT…SKNF). Positions 351 to 484 (FPSYLEQPDF…EYKLSNKFEV (134 aa)) are linker. Residues 484-861 (VPNCYSNLKI…KPIIVMYQLA (378 aa)) enclose the USP domain. The 175-residue stretch at 917 to 1091 (IAIDAEFVAL…EDANTALLLY (175 aa)) folds into the Exonuclease domain. 4 residues coordinate a divalent metal cation: Asp-920, Glu-922, Asp-1030, and Asp-1083.

This sequence belongs to the peptidase C19 family. PAN2 subfamily. In terms of assembly, forms a heterotrimer with an asymmetric homodimer of the regulatory subunit PAN3 to form the poly(A)-nuclease (PAN) deadenylation complex. The cofactor is a divalent metal cation.

Its subcellular location is the cytoplasm. The catalysed reaction is Exonucleolytic cleavage of poly(A) to 5'-AMP.. Its activity is regulated as follows. Positively regulated by the regulatory subunit PAN3. In terms of biological role, catalytic subunit of the poly(A)-nuclease (PAN) deadenylation complex, one of two cytoplasmic mRNA deadenylases involved in mRNA turnover. PAN specifically shortens poly(A) tails of RNA and the activity is stimulated by poly(A)-binding protein PAB1. PAN deadenylation is followed by rapid degradation of the shortened mRNA tails by the CCR4-NOT complex. Deadenylated mRNAs are then degraded by two alternative mechanisms, namely exosome-mediated 3'-5' exonucleolytic degradation, or deadenylation-dependent mRNA decaping and subsequent 5'-3' exonucleolytic degradation by XRN1. May also be involved in post-transcriptional maturation of mRNA poly(A) tails. This is PAN2-PAN3 deadenylation complex catalytic subunit PAN2 from Debaryomyces hansenii (strain ATCC 36239 / CBS 767 / BCRC 21394 / JCM 1990 / NBRC 0083 / IGC 2968) (Yeast).